The chain runs to 453 residues: MNIVILAAGTGKRMRSALPKVLHPLAGRPLLSHVIDTARALAPSRLVVVIGHGAEQVRAAVAAPDVQFAVQEQQLGTGHAVRQALPLLDPSQPTLVLYGDVPLTRTATLKRLADAATDARYGVLTVTLDDPTGYGRIVRDQAGCVTRIVEQKDASPDELRIDEINTGIVVAPTAQLSMWLGALGNDNAQGEYYLTDVVEQAIEAGFEIVTTQPDDEWETLGVNSKAQLAELERIHQRNLADALLAAGVTLADPARIDVRGTLACGRDVSIDVNCVFEGDVTLADGVTIGANCVIRHAAIAAGARVDAFSHLDGATVGANAVVGPYARLRPGAVLAADAHVGNFVEVKNATLGQGSKANHLTYLGDADIGARVNVGAGTITCNYDGANKFRTVIEDDVFVGSDTQFVAPVRVGRGVTVAAGTTVWKDVAADMLVLNDKTQTAKSGYVRPVKKKS.

Positions Met-1–Lys-225 are pyrophosphorylase. Residues Leu-6–Gly-9, Lys-20, Gln-71, Gly-76–Thr-77, Tyr-98–Asp-100, Gly-135, Glu-150, Asn-165, and Asn-223 contribute to the UDP-N-acetyl-alpha-D-glucosamine site. Residue Asp-100 participates in Mg(2+) binding. Asn-223 is a binding site for Mg(2+). The segment at Ala-226–Ala-246 is linker. The segment at Gly-247 to Ser-453 is N-acetyltransferase. Residues Arg-329 and Lys-347 each contribute to the UDP-N-acetyl-alpha-D-glucosamine site. His-359 (proton acceptor) is an active-site residue. Tyr-362 and Asn-373 together coordinate UDP-N-acetyl-alpha-D-glucosamine. Acetyl-CoA contacts are provided by residues Ala-376, Asn-382 to Tyr-383, Ser-401, and Ala-419.

The protein in the N-terminal section; belongs to the N-acetylglucosamine-1-phosphate uridyltransferase family. This sequence in the C-terminal section; belongs to the transferase hexapeptide repeat family. In terms of assembly, homotrimer. Requires Mg(2+) as cofactor.

The protein resides in the cytoplasm. The catalysed reaction is alpha-D-glucosamine 1-phosphate + acetyl-CoA = N-acetyl-alpha-D-glucosamine 1-phosphate + CoA + H(+). It catalyses the reaction N-acetyl-alpha-D-glucosamine 1-phosphate + UTP + H(+) = UDP-N-acetyl-alpha-D-glucosamine + diphosphate. It participates in nucleotide-sugar biosynthesis; UDP-N-acetyl-alpha-D-glucosamine biosynthesis; N-acetyl-alpha-D-glucosamine 1-phosphate from alpha-D-glucosamine 6-phosphate (route II): step 2/2. It functions in the pathway nucleotide-sugar biosynthesis; UDP-N-acetyl-alpha-D-glucosamine biosynthesis; UDP-N-acetyl-alpha-D-glucosamine from N-acetyl-alpha-D-glucosamine 1-phosphate: step 1/1. Its pathway is bacterial outer membrane biogenesis; LPS lipid A biosynthesis. In terms of biological role, catalyzes the last two sequential reactions in the de novo biosynthetic pathway for UDP-N-acetylglucosamine (UDP-GlcNAc). The C-terminal domain catalyzes the transfer of acetyl group from acetyl coenzyme A to glucosamine-1-phosphate (GlcN-1-P) to produce N-acetylglucosamine-1-phosphate (GlcNAc-1-P), which is converted into UDP-GlcNAc by the transfer of uridine 5-monophosphate (from uridine 5-triphosphate), a reaction catalyzed by the N-terminal domain. The chain is Bifunctional protein GlmU from Burkholderia mallei (strain NCTC 10247).